The primary structure comprises 327 residues: Transaldolase (327 aa).

K132 functions as the Schiff-base intermediate with substrate in the catalytic mechanism.

The protein belongs to the transaldolase family. Type 1 subfamily.

The protein resides in the cytoplasm. It carries out the reaction D-sedoheptulose 7-phosphate + D-glyceraldehyde 3-phosphate = D-erythrose 4-phosphate + beta-D-fructose 6-phosphate. Its pathway is carbohydrate degradation; pentose phosphate pathway; D-glyceraldehyde 3-phosphate and beta-D-fructose 6-phosphate from D-ribose 5-phosphate and D-xylulose 5-phosphate (non-oxidative stage): step 2/3. Transaldolase is important for the balance of metabolites in the pentose-phosphate pathway. The polypeptide is Transaldolase (Chlamydia muridarum (strain MoPn / Nigg)).